Consider the following 106-residue polypeptide: MVLATTEQIAGYEIIETLGIVLGNTVHSKHLGKDIAAAFKTLAGGEIRSYTELLTEARNIAIQRMIAEAEKLGADAIVGIKFGSSSVMQSAAEVLAYGTAVKIKKI.

This sequence belongs to the UPF0145 family.

The sequence is that of UPF0145 protein Tlet_1264 from Pseudothermotoga lettingae (strain ATCC BAA-301 / DSM 14385 / NBRC 107922 / TMO) (Thermotoga lettingae).